The following is a 268-amino-acid chain: Norsolorinic acid ketoreductase nor1 (268 aa).

Positions 32, 79, 108, 182, 186, 213, and 215 each coordinate NADP(+). The active-site Proton donor is the Tyr182. Residue Lys186 is the Lowers pKa of active site Tyr of the active site.

It belongs to the short-chain dehydrogenases/reductases (SDR) family.

The protein resides in the cytoplasm. Its subcellular location is the cytosol. It localises to the vacuole. The enzyme catalyses (1'S)-averantin + NADP(+) = norsolorinic acid + NADPH + H(+). Its pathway is mycotoxin biosynthesis. In terms of biological role, norsolorinic acid ketoreductase; part of the fragmented gene cluster that mediates the biosynthesis of dothistromin (DOTH), a polyketide toxin very similar in structure to the aflatoxin precursor, versicolorin B. The first step of the pathway is the conversion of acetate to norsolorinic acid (NOR) and requires the fatty acid synthase subunits hexA and hexB, as well as the polyketide synthase pksA. PksA combines a hexanoyl starter unit and 7 malonyl-CoA extender units to synthesize the precursor NOR. The hexanoyl starter unit is provided to the acyl-carrier protein (ACP) domain by the fungal fatty acid synthase hexA/hexB. The second step is the conversion of NOR to averantin (AVN) and requires the norsolorinic acid ketoreductase nor1, which catalyzes the dehydration of norsolorinic acid to form (1'S)-averantin. The cytochrome P450 monooxygenase avnA then catalyzes the hydroxylation of AVN to 5'hydroxyaverantin (HAVN). The next step is performed by adhA that transforms HAVN to averufin (AVF). Averufin might then be converted to hydroxyversicolorone by cypX and avfA. Hydroxyversicolorone is further converted versiconal hemiacetal acetate (VHA) by moxY. VHA is then the substrate for the versiconal hemiacetal acetate esterase est1 to yield versiconal (VAL). Versicolorin B synthase vbsA then converts VAL to versicolorin B (VERB) by closing the bisfuran ring. Then, the activity of the versicolorin B desaturase verB leads to versicolorin A (VERA). DotB, a predicted chloroperoxidase, may perform epoxidation of the A-ring of VERA. Alternatively, a cytochrome P450, such as cypX or avnA could catalyze this step. It is also possible that another, uncharacterized, cytochrome P450 enzyme is responsible for this step. Opening of the epoxide could potentially be achieved by the epoxide hydrolase epoA. However, epoA seems not to be required for DOTH biosynthesis, but other epoxide hydrolases may have the ability to complement this hydrolysis. Alternatively, opening of the epoxide ring could be achieved non-enzymatically. The next step is the deoxygenation of ring A to yield the 5,8-dihydroxyanthraquinone which is most likely catalyzed by the NADPH dehydrogenase encoded by ver1. The last stages of DOTH biosynthesis are proposed to involve hydroxylation of the bisfuran. OrdB and norB might have oxidative roles here. An alternative possibility is that cytochrome P450 monoogenases such as avnA and cypX might perform these steps in addition to previously proposed steps. This chain is Norsolorinic acid ketoreductase nor1, found in Dothistroma septosporum (strain NZE10 / CBS 128990) (Red band needle blight fungus).